A 290-amino-acid polypeptide reads, in one-letter code: uncharacterized protein (290 aa).

This sequence belongs to the glycosyltransferase 2 family.

This is an uncharacterized protein from Methanocaldococcus jannaschii (strain ATCC 43067 / DSM 2661 / JAL-1 / JCM 10045 / NBRC 100440) (Methanococcus jannaschii).